We begin with the raw amino-acid sequence, 203 residues long: MTLRSFLILLLSSIVLAGCSSVPESVTSVEWQAHEQRLETIDNFQATGKLGYIGPDQRQSLNFFWKHSSALSQLRLTTLLGQTALKLTITPQGATVETYDDQVLSARDANQLIYRLTGLMMPVDHLPDWLLGLPTDADSFQLSPTNTLQALDKQIGLNDWNIAYQRYGDIEWHEQTLPLPNKLRLSTSDVKINLVITKWNITQ.

A signal peptide spans 1–18 (MTLRSFLILLLSSIVLAG). The N-palmitoyl cysteine moiety is linked to residue Cys19. The S-diacylglycerol cysteine moiety is linked to residue Cys19.

Belongs to the LolB family. In terms of assembly, monomer.

It localises to the cell outer membrane. Functionally, plays a critical role in the incorporation of lipoproteins in the outer membrane after they are released by the LolA protein. The protein is Outer-membrane lipoprotein LolB of Vibrio campbellii (strain ATCC BAA-1116).